The following is a 219-amino-acid chain: PRELI domain-containing protein 1, mitochondrial (219 aa).

The PRELI/MSF1 domain occupies 36-174 (TEDIVHREVT…ILAKLQGEAP (139 aa)).

Forms a complex with TRIAP1 in the mitochondrion intermembrane space. Interacts with OPA1 and AIFM1.

The protein resides in the mitochondrion. It localises to the mitochondrion intermembrane space. The enzyme catalyses a 1,2-diacyl-sn-glycero-3-phosphate(in) = a 1,2-diacyl-sn-glycero-3-phosphate(out). Its function is as follows. Involved in the modulation of the mitochondrial apoptotic pathway by ensuring the accumulation of cardiolipin (CL) in mitochondrial membranes. In vitro, the TRIAP1:PRELID1 complex mediates the transfer of phosphatidic acid (PA) between liposomes and probably functions as a PA transporter across the mitochondrion intermembrane space to provide PA for CL synthesis in the inner membrane. Regulates the mitochondrial apoptotic pathway in primary Th cells. Regulates Th cell differentiation by down-regulating STAT6 thereby reducing IL-4-induced Th2 cell number. May be important for the development of vital and immunocompetent organs. This is PRELI domain-containing protein 1, mitochondrial (PRELID1) from Bos taurus (Bovine).